The primary structure comprises 147 residues: Hemoglobin subunit delta (147 aa).

The Globin domain maps to H3–H147. Residue S51 is modified to Phosphoserine. H64 and H93 together coordinate heme b.

The protein belongs to the globin family. Heterotetramer of two delta chains and two alpha chains. As to expression, red blood cells.

The sequence is that of Hemoglobin subunit delta (HBD) from Trichechus manatus (Caribbean manatee).